The primary structure comprises 529 residues: BTB/POZ domain-containing protein 6 (529 aa).

A BTB domain is found at 127–197 (ADVHFIVGPA…LYSDEIDLEA (71 aa)).

In terms of assembly, homodimer and heterodimer. Interacts with cul3 via the BTB domain.

Its subcellular location is the cytoplasm. Its function is as follows. Adapter protein for the cul3 E3 ubiquitin-protein ligase complex. Involved in late neuronal development and muscle formation. The polypeptide is BTB/POZ domain-containing protein 6 (btbd6) (Xenopus tropicalis (Western clawed frog)).